The primary structure comprises 371 residues: Dual-specificity RNA methyltransferase RlmN (371 aa).

Glu99 acts as the Proton acceptor in catalysis. Residues 106 to 333 form the Radical SAM core domain; it reads DDNRATLCIS…AIRRASKGQD (228 aa). Cys113 and Cys338 are oxidised to a cystine. The [4Fe-4S] cluster site is built by Cys120, Cys124, and Cys127. Residues 165–166, Ser197, 219–221, and Asn295 contribute to the S-adenosyl-L-methionine site; these read GE and SLN. The active-site S-methylcysteine intermediate is the Cys338. The disordered stretch occupies residues 345-371; it reads LTVSPPAQESERNSARPDRSQGKGKHL. The segment covering 353–365 has biased composition (basic and acidic residues); that stretch reads ESERNSARPDRSQ.

Belongs to the radical SAM superfamily. RlmN family. Requires [4Fe-4S] cluster as cofactor.

Its subcellular location is the cytoplasm. It carries out the reaction adenosine(2503) in 23S rRNA + 2 reduced [2Fe-2S]-[ferredoxin] + 2 S-adenosyl-L-methionine = 2-methyladenosine(2503) in 23S rRNA + 5'-deoxyadenosine + L-methionine + 2 oxidized [2Fe-2S]-[ferredoxin] + S-adenosyl-L-homocysteine. The enzyme catalyses adenosine(37) in tRNA + 2 reduced [2Fe-2S]-[ferredoxin] + 2 S-adenosyl-L-methionine = 2-methyladenosine(37) in tRNA + 5'-deoxyadenosine + L-methionine + 2 oxidized [2Fe-2S]-[ferredoxin] + S-adenosyl-L-homocysteine. Specifically methylates position 2 of adenine 2503 in 23S rRNA and position 2 of adenine 37 in tRNAs. m2A2503 modification seems to play a crucial role in the proofreading step occurring at the peptidyl transferase center and thus would serve to optimize ribosomal fidelity. The sequence is that of Dual-specificity RNA methyltransferase RlmN from Syntrophotalea carbinolica (strain DSM 2380 / NBRC 103641 / GraBd1) (Pelobacter carbinolicus).